The primary structure comprises 134 residues: Profilin-2 (134 aa).

C13 and C118 are joined by a disulfide. Residues A84–T100 carry the Involved in PIP2 interaction motif. Residue T114 is modified to Phosphothreonine.

The protein belongs to the profilin family. In terms of assembly, occurs in many kinds of cells as a complex with monomeric actin in a 1:1 ratio. In terms of processing, phosphorylated by MAP kinases.

It localises to the cytoplasm. It is found in the cytoskeleton. In terms of biological role, binds to actin and affects the structure of the cytoskeleton. At high concentrations, profilin prevents the polymerization of actin, whereas it enhances it at low concentrations. The chain is Profilin-2 from Olea europaea (Common olive).